A 420-amino-acid polypeptide reads, in one-letter code: Acyl-coenzyme A amino acid N-acyltransferase 2 (420 aa).

Active-site charge relay system residues include serine 235, aspartate 329, and histidine 363. Residues serine 418–leucine 420 carry the Microbody targeting signal motif.

This sequence belongs to the C/M/P thioester hydrolase family.

Its subcellular location is the peroxisome. Functionally, acyltransferase which efficiently conjugates very long-chain and long-chain fatty acids to taurine. Shows no conjugation activity in the presence of glycine. The polypeptide is Acyl-coenzyme A amino acid N-acyltransferase 2 (Mus musculus (Mouse)).